A 128-amino-acid chain; its full sequence is Putative protein SEM1, isoform 2 (128 aa).

A compositionally biased stretch (basic residues) spans 22-32; that stretch reads KHGIKRGRRPS. The interval 22–42 is disordered; it reads KHGIKRGRRPSIRSPAQRARG.

In Homo sapiens (Human), this protein is Putative protein SEM1, isoform 2.